A 541-amino-acid polypeptide reads, in one-letter code: Metal transporter Nramp1 (541 aa).

An N-linked (GlcNAc...) asparagine glycan is attached at Asn17. The next 10 membrane-spanning stretches (helical) occupy residues 45 to 65, 78 to 98, 122 to 142, 153 to 173, 182 to 202, 222 to 242, 271 to 291, 315 to 335, 371 to 391, and 392 to 412; these read LFAY…PGNF, ELLW…SLAA, FILW…EVIG, IPVW…LALQ, LFIA…LGYA, GAAG…NLFL, GFAL…SGAV, FLLE…ALLA, SLAI…GAGK, and LIII…VPLL. N-linked (GlcNAc...) asparagine glycosylation occurs at Asn426. Helical transmembrane passes span 430 to 450 and 465 to 485; these read ISSI…YYLA and VAAI…LAGV. N-linked (GlcNAc...) asparagine glycosylation occurs at Asn511.

Belongs to the NRAMP (TC 2.A.55) family.

Its subcellular location is the membrane. Its function is as follows. Probable divalent metal transporter. In Populus trichocarpa (Western balsam poplar), this protein is Metal transporter Nramp1.